The chain runs to 226 residues: ATP synthase subunit a (226 aa).

Transmembrane regions (helical) follow at residues 18-38, 79-99, 105-125, 134-154, 179-199, and 201-221; these read FITG…SLGA, LAGT…IPGF, SWSF…FEGI, FAHF…IEII, LIML…VLFF, and GILQ…GAVL.

It belongs to the ATPase A chain family. In terms of assembly, F-type ATPases have 2 components, CF(1) - the catalytic core - and CF(0) - the membrane proton channel. CF(1) has five subunits: alpha(3), beta(3), gamma(1), delta(1), epsilon(1). CF(0) has three main subunits: a(1), b(2) and c(9-12). The alpha and beta chains form an alternating ring which encloses part of the gamma chain. CF(1) is attached to CF(0) by a central stalk formed by the gamma and epsilon chains, while a peripheral stalk is formed by the delta and b chains.

The protein localises to the cell inner membrane. In terms of biological role, key component of the proton channel; it plays a direct role in the translocation of protons across the membrane. The protein is ATP synthase subunit a of Helicobacter pylori (strain HPAG1).